Here is a 218-residue protein sequence, read N- to C-terminus: N-(5'-phosphoribosyl)anthranilate isomerase (218 aa).

This sequence belongs to the TrpF family.

It carries out the reaction N-(5-phospho-beta-D-ribosyl)anthranilate = 1-(2-carboxyphenylamino)-1-deoxy-D-ribulose 5-phosphate. It participates in amino-acid biosynthesis; L-tryptophan biosynthesis; L-tryptophan from chorismate: step 3/5. This chain is N-(5'-phosphoribosyl)anthranilate isomerase, found in Alcanivorax borkumensis (strain ATCC 700651 / DSM 11573 / NCIMB 13689 / SK2).